Consider the following 180-residue polypeptide: Small ribosomal subunit protein uS4 (180 aa).

Residues 103–165 (RRLQTLVYKK…KNSPFAKESH (63 aa)) form the S4 RNA-binding domain.

It belongs to the universal ribosomal protein uS4 family. In terms of assembly, part of the 30S ribosomal subunit. Contacts protein S5. The interaction surface between S4 and S5 is involved in control of translational fidelity.

Its function is as follows. One of the primary rRNA binding proteins, it binds directly to 16S rRNA where it nucleates assembly of the body of the 30S subunit. With S5 and S12 plays an important role in translational accuracy. The sequence is that of Small ribosomal subunit protein uS4 from Thermococcus gammatolerans (strain DSM 15229 / JCM 11827 / EJ3).